The sequence spans 558 residues: MDFKQKVVDLVSEQVDLPKEKISMLIERPKNPKMGDYAFPAFALAKIEHKNPALIAKDIAEKISDDNFTSIQAVGPYVNFAIDHAKLVNATLNDVLTEKEHFGDQKLGEGNVPIDMSSPNIAKPMSMGHLRSTVIGNSIAKTLEKVGYTPIKINYLGDYGTQFGKLITAYRLWGNEGDVKKDPITNLFHYYVKFHEEAEKDPKLEDEGRAAFKKLENGDEEEIKLWKWFREVSLQEFNRIYKELGVTFDSYNGEAFFNDKMQPVVDELREKGLLEESRGAQVVNLGEDENPALILKSDGSSLYMTRDLAAALYRKKEYDFVMSLYVAGGEQTGHFKQLKQVLKKMGYDWSDNIHHIPFGLITQGGKKLSTRKGNVVFLDQVLKDAVSLAEQQIEEKNPNLSNKKQVAHDVGVGAVVFHDLKNDRMDNFDFDLEEVVRFEGDTGPYVQYTNARAQSILRKANKEISMDNLSLNDDWSFAVAKALADFPAIVEKASEKFEPSIIAKYALDLSKKFNKYYANVRILDEDNQLNARLALVQATSIVLTEALRLLGVNAPKEM.

A 'HIGH' region motif is present at residues 119-129 (PNIAKPMSMGH).

The protein belongs to the class-I aminoacyl-tRNA synthetase family. As to quaternary structure, monomer.

Its subcellular location is the cytoplasm. The catalysed reaction is tRNA(Arg) + L-arginine + ATP = L-arginyl-tRNA(Arg) + AMP + diphosphate. In Lactobacillus johnsonii (strain CNCM I-12250 / La1 / NCC 533), this protein is Arginine--tRNA ligase.